The primary structure comprises 67 residues: UPF0519 protein C (67 aa).

The segment at 18 to 37 (KSQANLNSNSTNSPNNVQGL) is disordered. The segment covering 22–33 (NLNSNSTNSPNN) has biased composition (low complexity).

This sequence belongs to the UPF0519 family.

This Dictyostelium discoideum (Social amoeba) protein is UPF0519 protein C.